A 226-amino-acid chain; its full sequence is Large ribosomal subunit protein uL1 (226 aa).

The protein belongs to the universal ribosomal protein uL1 family. Part of the 50S ribosomal subunit.

In terms of biological role, binds directly to 23S rRNA. The L1 stalk is quite mobile in the ribosome, and is involved in E site tRNA release. Protein L1 is also a translational repressor protein, it controls the translation of the L11 operon by binding to its mRNA. This is Large ribosomal subunit protein uL1 from Mycoplasmoides gallisepticum (strain R(low / passage 15 / clone 2)) (Mycoplasma gallisepticum).